The following is a 566-amino-acid chain: Proline--tRNA ligase (566 aa).

It belongs to the class-II aminoacyl-tRNA synthetase family. ProS type 1 subfamily. As to quaternary structure, homodimer.

It is found in the cytoplasm. The catalysed reaction is tRNA(Pro) + L-proline + ATP = L-prolyl-tRNA(Pro) + AMP + diphosphate. Catalyzes the attachment of proline to tRNA(Pro) in a two-step reaction: proline is first activated by ATP to form Pro-AMP and then transferred to the acceptor end of tRNA(Pro). As ProRS can inadvertently accommodate and process non-cognate amino acids such as alanine and cysteine, to avoid such errors it has two additional distinct editing activities against alanine. One activity is designated as 'pretransfer' editing and involves the tRNA(Pro)-independent hydrolysis of activated Ala-AMP. The other activity is designated 'posttransfer' editing and involves deacylation of mischarged Ala-tRNA(Pro). The misacylated Cys-tRNA(Pro) is not edited by ProRS. In Bacillus cytotoxicus (strain DSM 22905 / CIP 110041 / 391-98 / NVH 391-98), this protein is Proline--tRNA ligase.